The following is a 236-amino-acid chain: Conserved regulator of innate immunity protein 3 (236 aa).

Residues 1–36 (MNTASLVRSLSRVALRSSQVVRMAAPRHFSQSAKVL) constitute a mitochondrion transit peptide.

This sequence belongs to the MAM33 family.

It localises to the mitochondrion matrix. This is Conserved regulator of innate immunity protein 3 (cri-3) from Caenorhabditis elegans.